Here is a 218-residue protein sequence, read N- to C-terminus: Dehydration-responsive element-binding protein 1B (218 aa).

The interval 1-26 (MEVEEAAYRTVWSEPPKRPAGRTKFR) is disordered. The segment at residues 32–95 (VYRGVRRRGG…RGRAACLNFA (64 aa)) is a DNA-binding region (AP2/ERF). The tract at residues 131-151 (SAAPSSPAETFANDGDEEEDN) is disordered.

It belongs to the AP2/ERF transcription factor family. ERF subfamily.

The protein resides in the nucleus. In terms of biological role, transcriptional activator that binds specifically to the DNA sequence 5'-[AG]CCGAC-3'. Binding to the C-repeat/DRE element mediates high salinity- and dehydration-inducible transcription. Confers resistance to high salt, cold and drought stress. The protein is Dehydration-responsive element-binding protein 1B (DREB1B) of Oryza sativa subsp. japonica (Rice).